The following is a 361-amino-acid chain: Phenylalanine--tRNA ligase alpha subunit (361 aa).

Residue E260 participates in Mg(2+) binding.

The protein belongs to the class-II aminoacyl-tRNA synthetase family. Phe-tRNA synthetase alpha subunit type 1 subfamily. As to quaternary structure, tetramer of two alpha and two beta subunits. Requires Mg(2+) as cofactor.

The protein resides in the cytoplasm. It carries out the reaction tRNA(Phe) + L-phenylalanine + ATP = L-phenylalanyl-tRNA(Phe) + AMP + diphosphate + H(+). The protein is Phenylalanine--tRNA ligase alpha subunit of Bartonella henselae (strain ATCC 49882 / DSM 28221 / CCUG 30454 / Houston 1) (Rochalimaea henselae).